The following is a 687-amino-acid chain: Putative secreted metallopeptidase (687 aa).

Positions 1 to 22 are cleaved as a signal peptide; sequence MLFTSTAVAALSGALLIQPALA. N-linked (GlcNAc...) asparagine glycosylation is found at N54, N114, N252, N256, and N379.

Belongs to the peptidase M10B family.

The protein localises to the secreted. The sequence is that of Putative secreted metallopeptidase from Arthroderma benhamiae (strain ATCC MYA-4681 / CBS 112371) (Trichophyton mentagrophytes).